We begin with the raw amino-acid sequence, 880 residues long: MNSSEIRKRYLEFFAARGHRVIPSASLIPGNDPTLLWTSAGMVPFKPYFTGVATPEFRRVVTCQKCLRTPDIEMVGRTARHHTFFEMLGNFSFGDYFKERAIPWAWEFVTRDLGLAPEHLWISVYLDDNEAFDHWRGLGVPAERIVRLGRDTNFWEIGVGPCGPCSEVYYDRGPAYGCESASCGPGCDCDRWLEIWNLVFIQYFRNEAGDYSPLESPGIDTGMGLERVASVLQGVNTNFDTDLFRGLIDYTAGVLGVRYGDDPAGDAALKVIADHGRAITFAIADGVLPSNEGRGYVIRRLLRRAVRKALLLGREKPFLEGVALAVIEQMAGAYPELETARDSVRKVVRFEEERFRQTLTQGNEIIGRLIAEARAEKRSTLEGAAAFQLYDTYGFPLELTREICAEQGLAVDEAGFEAALKAQQQKARSSRRETRYVEERETFFRNLRDEIGLTRFVGYEQLEADAGVRALIRDGQRVPAAGSGEQVSLVVDTTPCYAESGGQVGDHGLIEGENVRGRITDTFAPVEGLHVHEVVVEAGVLEEGARIRILVDGSRRRKICRNHTATHLLHRTLKAVLGTHVNQAGSLVAPERLRFDFTHIQPLSEAELAEVESRINEIVLSNLRVESFQTSFDRARELGAVALFGEKYGDLVRVVQIDGVSMELCGGTHVLSTAEIGPVKITAESSVGAGLRRLEAVTGMEALAFLNSRNEQLHRIAQAVRVPVSELVVHVERLLDHQKKLQRENEQLQDRLQVYEVKELLDRASTHEGVRILATSVRARDMAELRSMLDLLRERLGSAVIVLGSAVNGKVSLVASVSRDLVARGLHAGAIIKEAAAVAGGGGGGRPEMAQAGGKNPEKLTEALEKARQVVLRRVDGGSA.

4 residues coordinate Zn(2+): H563, H567, C665, and H669.

It belongs to the class-II aminoacyl-tRNA synthetase family. It depends on Zn(2+) as a cofactor.

The protein localises to the cytoplasm. It catalyses the reaction tRNA(Ala) + L-alanine + ATP = L-alanyl-tRNA(Ala) + AMP + diphosphate. Its function is as follows. Catalyzes the attachment of alanine to tRNA(Ala) in a two-step reaction: alanine is first activated by ATP to form Ala-AMP and then transferred to the acceptor end of tRNA(Ala). Also edits incorrectly charged Ser-tRNA(Ala) and Gly-tRNA(Ala) via its editing domain. The protein is Alanine--tRNA ligase of Desulforudis audaxviator (strain MP104C).